The sequence spans 113 residues: Nucleoid-associated protein Csac_1593 (113 aa).

This sequence belongs to the YbaB/EbfC family. Homodimer.

It localises to the cytoplasm. It is found in the nucleoid. In terms of biological role, binds to DNA and alters its conformation. May be involved in regulation of gene expression, nucleoid organization and DNA protection. This chain is Nucleoid-associated protein Csac_1593, found in Caldicellulosiruptor saccharolyticus (strain ATCC 43494 / DSM 8903 / Tp8T 6331).